Here is a 378-residue protein sequence, read N- to C-terminus: Protein KlaB (378 aa).

It belongs to the TelA family.

Functionally, belongs to the kla operon, which is associated with cryptic tellurite resistance, and IncW plasmid fertility inhibition. The polypeptide is Protein KlaB (klaB) (Escherichia coli).